Reading from the N-terminus, the 354-residue chain is Protein-glutamate methylesterase/protein-glutamine glutaminase 2 (354 aa).

In terms of domain architecture, Response regulatory spans 3-120 (RVVVVDDSMS…PADLADYARD (118 aa)). Asp54 carries the post-translational modification 4-aspartylphosphate. The 191-residue stretch at 164 to 354 (ATRLSRVIAI…MGARLSEALQ (191 aa)) folds into the CheB-type methylesterase domain. Catalysis depends on residues Ser176, His202, and Asp298.

Belongs to the CheB family. In terms of processing, phosphorylated by CheA. Phosphorylation of the N-terminal regulatory domain activates the methylesterase activity.

Its subcellular location is the cytoplasm. The catalysed reaction is [protein]-L-glutamate 5-O-methyl ester + H2O = L-glutamyl-[protein] + methanol + H(+). It carries out the reaction L-glutaminyl-[protein] + H2O = L-glutamyl-[protein] + NH4(+). In terms of biological role, involved in chemotaxis. Part of a chemotaxis signal transduction system that modulates chemotaxis in response to various stimuli. Catalyzes the demethylation of specific methylglutamate residues introduced into the chemoreceptors (methyl-accepting chemotaxis proteins or MCP) by CheR. Also mediates the irreversible deamidation of specific glutamine residues to glutamic acid. The polypeptide is Protein-glutamate methylesterase/protein-glutamine glutaminase 2 (Burkholderia thailandensis (strain ATCC 700388 / DSM 13276 / CCUG 48851 / CIP 106301 / E264)).